The chain runs to 63 residues: Cecropin-1/3 (63 aa).

The signal sequence occupies residues 1-23 (MNFYKVFIFVALILAISLGQSEA). Residue R62 is modified to Arginine amide.

It belongs to the cecropin family.

It localises to the secreted. Cecropins have lytic and antibacterial activity against several Gram-positive and Gram-negative bacteria. This is Cecropin-1/3 (Cec1) from Drosophila virilis (Fruit fly).